The chain runs to 488 residues: UDP-N-acetylmuramate--L-alanine ligase (488 aa).

129–135 (GTHGKTT) is an ATP binding site.

The protein belongs to the MurCDEF family.

The protein localises to the cytoplasm. It carries out the reaction UDP-N-acetyl-alpha-D-muramate + L-alanine + ATP = UDP-N-acetyl-alpha-D-muramoyl-L-alanine + ADP + phosphate + H(+). The protein operates within cell wall biogenesis; peptidoglycan biosynthesis. In terms of biological role, cell wall formation. This chain is UDP-N-acetylmuramate--L-alanine ligase, found in Chromohalobacter salexigens (strain ATCC BAA-138 / DSM 3043 / CIP 106854 / NCIMB 13768 / 1H11).